The sequence spans 223 residues: Translation initiation factor 6 (223 aa).

It belongs to the eIF-6 family.

Functionally, binds to the 50S ribosomal subunit and prevents its association with the 30S ribosomal subunit to form the 70S initiation complex. This Sulfolobus acidocaldarius (strain ATCC 33909 / DSM 639 / JCM 8929 / NBRC 15157 / NCIMB 11770) protein is Translation initiation factor 6.